A 181-amino-acid chain; its full sequence is ATP-dependent protease subunit HslV (181 aa).

T9 is an active-site residue. A166, C169, and T172 together coordinate Na(+).

It belongs to the peptidase T1B family. HslV subfamily. A double ring-shaped homohexamer of HslV is capped on each side by a ring-shaped HslU homohexamer. The assembly of the HslU/HslV complex is dependent on binding of ATP.

The protein resides in the cytoplasm. The catalysed reaction is ATP-dependent cleavage of peptide bonds with broad specificity.. Its activity is regulated as follows. Allosterically activated by HslU binding. Functionally, protease subunit of a proteasome-like degradation complex believed to be a general protein degrading machinery. The polypeptide is ATP-dependent protease subunit HslV (Staphylococcus aureus (strain bovine RF122 / ET3-1)).